The primary structure comprises 871 residues: Metabotropic glutamate receptor 6 (871 aa).

The signal sequence occupies residues Met-1–Gly-23. Over Ala-24 to Trp-579 the chain is Extracellular. Cys-51 and Cys-93 are disulfide-bonded. Residues Ser-148, Ala-169–Thr-171, and Tyr-219 contribute to the L-glutamate site. Cystine bridges form between Cys-238/Cys-530, Cys-361/Cys-377, Cys-417/Cys-424, Cys-512/Cys-531, Cys-516/Cys-534, Cys-537/Cys-549, and Cys-552/Cys-565. A glycan (N-linked (GlcNAc...) asparagine) is linked at Asn-290. Asp-301 serves as a coordination point for L-glutamate. Lys-394 is an L-glutamate binding site. Asn-445 and Asn-473 each carry an N-linked (GlcNAc...) asparagine glycan. Asn-561 is a glycosylation site (N-linked (GlcNAc...) asparagine). A helical membrane pass occupies residues Ala-580–Met-602. Topologically, residues Arg-603–Glu-616 are cytoplasmic. The chain crosses the membrane as a helical span at residues Leu-617–Ala-637. Residues Glu-638–Arg-648 are Extracellular-facing. A helical transmembrane segment spans residues Leu-649–Asn-667. The Cytoplasmic segment spans residues Arg-668–Gln-691. The helical transmembrane segment at Leu-692 to Ala-712 threads the bilayer. Residues Gln-713–Asp-742 lie on the Extracellular side of the membrane. A helical transmembrane segment spans residues Leu-743–Ile-764. Topologically, residues Lys-765–Lys-777 are cytoplasmic. The helical transmembrane segment at Pro-778–Thr-800 threads the bilayer. At Ala-801–Thr-813 the chain is on the extracellular side. Residues Leu-814–Phe-839 form a helical membrane-spanning segment. Over His-840–Lys-871 the chain is Cytoplasmic. A disordered region spans residues Arg-848–Lys-871.

The protein belongs to the G-protein coupled receptor 3 family. As to quaternary structure, homodimer. Interacts with GPR179. Interacts with photoreceptor synaptic protein LRIT1 (via its N-terminal extracellular domain). Detected in the outer plexiform layer in retina (at protein level).

Its subcellular location is the cell membrane. It localises to the endoplasmic reticulum membrane. The protein resides in the golgi apparatus membrane. The protein localises to the cell projection. It is found in the dendrite. Its function is as follows. G-protein coupled receptor for glutamate. Ligand binding causes a conformation change that triggers signaling via guanine nucleotide-binding proteins (G proteins) and modulates the activity of down-stream effectors, such as adenylate cyclase. Signaling inhibits adenylate cyclase activity. Signaling stimulates TRPM1 channel activity and Ca(2+) uptake. Required for normal vision. The polypeptide is Metabotropic glutamate receptor 6 (Grm6) (Mus musculus (Mouse)).